A 387-amino-acid chain; its full sequence is DNA double-strand break repair protein Mre11 (387 aa).

Residues Asp-9, His-11, Asp-50, and Asn-85 each coordinate Mn(2+). His-86 functions as the Proton donor in the catalytic mechanism. Residues His-150, Asp-181, and His-183 each coordinate Mn(2+). The interval Ala-365–Gln-387 is disordered. The segment covering Val-366–Asp-375 has biased composition (acidic residues).

This sequence belongs to the MRE11/RAD32 family. As to quaternary structure, homodimer. Forms a heterotetramer composed of two Mre11 subunits and two Rad50 subunits. Mn(2+) serves as cofactor.

Nuclease activity is regulated by Rad50. Part of the Rad50/Mre11 complex, which is involved in the early steps of DNA double-strand break (DSB) repair. Mre11 binds to DSB ends and has both double-stranded 3'-5' exonuclease activity and single-stranded endonuclease activity. This is DNA double-strand break repair protein Mre11 from Halobacterium salinarum (strain ATCC 700922 / JCM 11081 / NRC-1) (Halobacterium halobium).